The primary structure comprises 1390 residues: DNA-directed RNA polymerase subunit beta (1390 aa).

The segment at 556-576 is disordered; it reads KLADQDAENDPDSDLGTKSSN.

Belongs to the RNA polymerase beta chain family. In terms of assembly, the RNAP catalytic core consists of 2 alpha, 1 beta, 1 beta' and 1 omega subunit. When a sigma factor is associated with the core the holoenzyme is formed, which can initiate transcription.

It catalyses the reaction RNA(n) + a ribonucleoside 5'-triphosphate = RNA(n+1) + diphosphate. Its function is as follows. DNA-dependent RNA polymerase catalyzes the transcription of DNA into RNA using the four ribonucleoside triphosphates as substrates. The sequence is that of DNA-directed RNA polymerase subunit beta from Mycoplasmoides gallisepticum (strain R(low / passage 15 / clone 2)) (Mycoplasma gallisepticum).